The chain runs to 284 residues: Halorhodopsin (284 aa).

The Extracellular portion of the chain corresponds to 1–30 (MIETAAADILAGGMVPLEMTQTQIFEAVQS). Residues 31–56 (DTLLASSLWINIALAGLSILLFVYMG) traverse the membrane as a helical segment. The Cytoplasmic segment spans residues 57–62 (RNVEDP). A helical membrane pass occupies residues 63 to 86 (RAQLIFVATLMVPLVSISSYTGLV). At 87–110 (SGLTVSFLEMPAGHALAGQEVLTP) the chain is on the extracellular side. A helical membrane pass occupies residues 111 to 132 (WGRYLTWALSTPMILIAVGLLA). Topologically, residues 133 to 135 (GSN) are cytoplasmic. The chain crosses the membrane as a helical span at residues 136–159 (TTKLFTAVVADIGMCVTGLAAALT). The Extracellular segment spans residues 160 to 162 (TSS). A helical membrane pass occupies residues 163–185 (YLLRWVWYAISCAFFVVVLYILL). The Cytoplasmic segment spans residues 186-197 (AEWAEDAEIAGT). The chain crosses the membrane as a helical span at residues 198–221 (ADIFNTLKVLTVVLWLGYPIFWAL). The Extracellular portion of the chain corresponds to 222–230 (GAEGLAVLD). A helical transmembrane segment spans residues 231 to 259 (VAITSWAYSGMDIVAKYLFAFLLLRWVVN). Lys-246 bears the N6-(retinylidene)lysine mark. Residues 260 to 284 (NERTVADVASGLGSGSRGGAAPADD) are Cytoplasmic-facing.

It belongs to the archaeal/bacterial/fungal opsin family.

It is found in the cell membrane. Light-driven chloride pump. The sequence is that of Halorhodopsin (hop) from Halobacterium sp. (strain SG1).